Consider the following 179-residue polypeptide: UPF0227 protein VP0969 (179 aa).

The protein belongs to the UPF0227 family.

The sequence is that of UPF0227 protein VP0969 from Vibrio parahaemolyticus serotype O3:K6 (strain RIMD 2210633).